The following is a 293-amino-acid chain: Amine sulfotransferase (293 aa).

Residue 46–51 (KSGTIW) coordinates 3'-phosphoadenylyl sulfate. The active-site Proton acceptor is H101. Residues R123, S131, 220-225 (ATFQKM), and 252-254 (RKG) contribute to the 3'-phosphoadenylyl sulfate site.

This sequence belongs to the sulfotransferase 1 family.

The protein localises to the cytoplasm. The catalysed reaction is a primary amine + 3'-phosphoadenylyl sulfate = a sulfamate + adenosine 3',5'-bisphosphate + 2 H(+). Its function is as follows. Sulfotransferase that utilizes 3'-phospho-5'-adenylyl sulfate (PAPS) as sulfonate donor to catalyze the N-sulfonation of amines. The sequence is that of Amine sulfotransferase (Sult3a1) from Mus musculus (Mouse).